A 182-amino-acid polypeptide reads, in one-letter code: NADH-quinone oxidoreductase subunit I (182 aa).

4Fe-4S ferredoxin-type domains are found at residues leucine 52–alanine 82 and aspartate 92–aspartate 121. The [4Fe-4S] cluster site is built by cysteine 62, cysteine 65, cysteine 68, cysteine 72, cysteine 101, cysteine 104, cysteine 107, and cysteine 111.

This sequence belongs to the complex I 23 kDa subunit family. As to quaternary structure, NDH-1 is composed of 13 different subunits. Subunits NuoA, H, J, K, L, M, N constitute the membrane sector of the complex. [4Fe-4S] cluster serves as cofactor.

The protein localises to the cell inner membrane. The enzyme catalyses a quinone + NADH + 5 H(+)(in) = a quinol + NAD(+) + 4 H(+)(out). Its function is as follows. NDH-1 shuttles electrons from NADH, via FMN and iron-sulfur (Fe-S) centers, to quinones in the respiratory chain. The immediate electron acceptor for the enzyme in this species is believed to be ubiquinone. Couples the redox reaction to proton translocation (for every two electrons transferred, four hydrogen ions are translocated across the cytoplasmic membrane), and thus conserves the redox energy in a proton gradient. The protein is NADH-quinone oxidoreductase subunit I of Pseudomonas savastanoi pv. phaseolicola (strain 1448A / Race 6) (Pseudomonas syringae pv. phaseolicola (strain 1448A / Race 6)).